Consider the following 334-residue polypeptide: MRYVKLHSEYFPEFFNRLKEVGRVYGPVRHNSTYRFEEVNSIDELSLDYTRTILPPKKFFIRPRDAMFKIQKNEVTEVDGDGKFVLFGVHSCDIHGIKILDKVYLSNPPDPYYERRRKNAFIVGISCMPDEYCFCKSLGTDFAMDGFDIFLHELPDGWLVRVGSVKGHEFVWENQDIFDDVTEEDLRNFKEFEEKRAKAFKKSLNKEGLADILDLAFTSKVWKKYAEKCLGCGNCTIVCPTCRCYEVCDTWVRAYEALRMRRYDSCFMPTHGLVAGGHNFRPTRLDRFRHRYYCKNYFDPEAGFNCVGCGRCDEFCPARIEHVKVLDEVREGLI.

4Fe-4S ferredoxin-type domains follow at residues 220 to 250 (KVWK…VCDT) and 294 to 328 (CKNY…VLDE). [4Fe-4S] cluster is bound by residues C229, C232, C235, C239, C306, C309, C312, and C316.

In terms of assembly, dimer of heterotetramer of alpha, beta, gamma and delta subunits. The nickel-containing alpha and delta subunits constitute the hydrogenase activity. The beta and gamma subunits (flavin-containing dimer) constitute the sulfur reductase activity. The cofactor is [4Fe-4S] cluster.

The protein localises to the cytoplasm. It catalyses the reaction n sulfur + H2 = (n-1) sulfur + hydrogen sulfide + H(+). Part of a bifunctional enzyme complex that functions as a hydrogen-evolving hydrogenase with sulfur-reducing activity. May play a role in hydrogen cycling during fermentative growth. Activity exhibited with NAD in addition to NADPH. The beta and gamma subunits form the sulfur-reducing component that catalyzes the cytoplasmic production of hydrogen sulfide in the presence of elemental sulfur. This chain is Sulfhydrogenase 2 subunit beta, found in Pyrococcus furiosus (strain ATCC 43587 / DSM 3638 / JCM 8422 / Vc1).